A 488-amino-acid polypeptide reads, in one-letter code: Sterol 14-demethylase (488 aa).

The chain crosses the membrane as a helical span at residues 12-32 (TGLVIVATLVIAKLIFSFFTS). Cysteine 433 lines the heme pocket.

The protein belongs to the cytochrome P450 family. Requires heme as cofactor. In terms of tissue distribution, expressed in leaves, roots, stems, siliques, flowers, flower buds and seedlings.

It is found in the membrane. It carries out the reaction a 14alpha-methyl steroid + 3 reduced [NADPH--hemoprotein reductase] + 3 O2 = a Delta(14) steroid + formate + 3 oxidized [NADPH--hemoprotein reductase] + 4 H2O + 4 H(+). Functionally, involved in sterol biosynthesis. Catalyzes the 14-alpha demethylation of obtusifoliol to 4 alpha-methyl-5 alpha-ergosta-8,14,24(28)-trien-3 beta-ol. This is Sterol 14-demethylase (CYP51G1) from Arabidopsis thaliana (Mouse-ear cress).